We begin with the raw amino-acid sequence, 585 residues long: MYKRNGLMASVLVTSATPQGSSSSDSLEGQSCDYASKSYDAVVFDVLKVTPEEFASQITLMDIPVFKAIQPEELASCGWSKKEKHSLAPNVVAFTRRFNQVSFWVVREILTAQTLKIRAEILSHFVKIAKKLLELNNLHSLMSVVSALQSAPIFRLTKTWALLNRKDKTTFEKLDYLMSKEDNYKRTRDYIRSLKMVPSIPYLGIYLLDLIYIDSAYPASGSIMENEQRSNQMNNILRIIADLQVSCSYDHLTTLPHVQKYLKSVRYIEELQKFVEDDNYKLSLRIEPGSSSPRLVSSKEDLAGPSAGSSSARFRRRPTCPDTSVAGSLPTPPVPRHRKSHSLGNNLMCQLSVVESKSATFPSEKARHLLDDSVLESRSPRRGLTHTSSTAITNGLSLGSSESSEFSEEMSAGLESRGRLYATLGPNWRVPVRNSPRTRSCVYSPTSPCTCTVGSSATVPTMEGPLRRKTLLKEGRKPALSSWTRYWVVLSGATLLYYGAKSLRGTDRKHYKSTPGKKVSIVGWMVQLPDDPEHPDIFQLNNPDKGNVYKFQTGSRFHAILWHKHLDDACKSSRPQVPANLMSFE.

The Ras-GEF domain maps to 50-289; that stretch reads TPEEFASQIT…YKLSLRIEPG (240 aa). Disordered stretches follow at residues 289 to 342 and 378 to 410; these read GSSS…KSHS and RSPR…SEEM. The segment covering 303 to 312 has biased composition (low complexity); that stretch reads AGPSAGSSSA. Positions 330–333 match the PXXP motif; sequence PTPP. A compositionally biased stretch (polar residues) spans 385–396; it reads THTSSTAITNGL. The PH domain occupies 459 to 571; it reads VPTMEGPLRR…WHKHLDDACK (113 aa). The required for stimulation of nucleotide exchange by RALA stretch occupies residues 461 to 585; the sequence is TMEGPLRRKT…QVPANLMSFE (125 aa).

In terms of assembly, interacts with the SH3 domains of GRB2, NCK1, PLCG1 and SRC.

The protein localises to the cytoplasm. It is found in the cell membrane. Guanine nucleotide exchange factor for the small GTPase RALA. May be involved in cytoskeleton organization. The sequence is that of Ras-specific guanine nucleotide-releasing factor RalGPS1 (Ralgps1) from Mus musculus (Mouse).